The chain runs to 298 residues: Ethylmalonyl-CoA decarboxylase (298 aa).

It belongs to the enoyl-CoA hydratase/isomerase family.

The protein resides in the cytoplasm. Its subcellular location is the cytosol. It carries out the reaction (2S)-ethylmalonyl-CoA + H(+) = butanoyl-CoA + CO2. The enzyme catalyses (S)-methylmalonyl-CoA + H(+) = propanoyl-CoA + CO2. It catalyses the reaction (2R)-ethylmalonyl-CoA + H(+) = butanoyl-CoA + CO2. In terms of biological role, decarboxylates ethylmalonyl-CoA, a potentially toxic metabolite, to form butyryl-CoA, suggesting it might be involved in metabolite proofreading. Acts preferentially on (S)-ethylmalonyl-CoA but also has some activity on the (R)-isomer. Also has methylmalonyl-CoA decarboxylase activity at lower level. The protein is Ethylmalonyl-CoA decarboxylase (ECHDC1) of Gallus gallus (Chicken).